The chain runs to 501 residues: L-ornithine N(5)-monooxygenase (501 aa).

The segment at 1–31 (MESVERKSESSYLGMRNMQPEQRLSLDPPRL) is disordered. FAD is bound by residues 83-91 (ERQKQFAWH) and Gln102. Substrate is bound at residue Lys107. Position 168 (Val168) interacts with FAD. NADP(+) contacts are provided by residues 254 to 257 (SGQS) and Arg279. Residues 293–296 (NEIF) and Asn323 each bind substrate. An NADP(+)-binding site is contributed by 323 to 325 (NYS). The segment at 366–390 (EHHGPQSRMRIHLKSSKPESEGAAN) is disordered. Basic and acidic residues predominate over residues 381 to 390 (SKPESEGAAN). 466–468 (SLL) contacts FAD. Position 469 (Ser469) interacts with substrate.

The protein belongs to the lysine N(6)-hydroxylase/L-ornithine N(5)-oxygenase family. As to quaternary structure, homotetramer. Requires FAD as cofactor.

The catalysed reaction is L-ornithine + NADPH + O2 = N(5)-hydroxy-L-ornithine + NADP(+) + H2O. It catalyses the reaction L-ornithine + NADH + O2 = N(5)-hydroxy-L-ornithine + NAD(+) + H2O. Its pathway is siderophore biosynthesis; ferrichrome biosynthesis. Functionally, L-ornithine N(5)-monooxygenase; part of the siderophore biosynthetic pathway. Aspergillus fumigatus produces four types of siderophores, low-molecular-mass iron chelators, including excreted fusarinine C (FsC) and triacetylfusarinine C (TAFC) for iron uptake; and intacellular ferricrocin (FC) for hyphal and hydroxyferricrocin (HFC) for conidial iron distribution and storage. TAFC consists of three N(2)-acetyl-N(5)-anhydromevalonyl-N(5)-hydroxyornithine residues cyclically linked by ester bonds; FC is a cyclic hexapeptide with the structure Gly-Ser-Gly-(N(5)-acetyl-N(5)-hydroxyornithine)x3. The biosynthesis of all four siderophores depends on the hydroxylation of ornithine, catalyzed by the monooxygenase sidA. SidA is highly specific for its substrate, only hydrolyzing l-ornithine, and has preference for NADPH over NADH, NADPH playing a role in stabilization of the C4a-hydroperoxyflavin intermediate. Subsequently, the pathways for biosynthesis of extra- and intracellular siderophores split. For biosynthesis of extracellular siderophores, the transacylase sidF transfers anhydromevalonyl to N(5)-hydroxyornithine. The required anhydromevalonyl-CoA moiety is derived from mevalonate by CoA ligation and dehydration catalyzed by sidI and sidH respectively. The acetylation of N(5)-hydroxyornithine for FC biosynthesis involves the constitutively expressed sidL. FC is hydroxylated to HFC by an as yet uncharacterized enzyme during conidiation. Assembly of fusarinine C (FsC) and FC is catalyzed by two different nonribosomal peptide synthetases (NRPS), sidD and sidC respectively. Subsequently, sidG catalyzes N2-acetylation of FsC for forming TAFC. Both extra- and intracellular siderophores are crucial for growth during iron limitation and virulence. The protein is L-ornithine N(5)-monooxygenase of Aspergillus fumigatus (strain ATCC MYA-4609 / CBS 101355 / FGSC A1100 / Af293) (Neosartorya fumigata).